The chain runs to 471 residues: Mixed lineage kinase domain-like protein (471 aa).

An N-terminal bundle and brace (NBB); mediates INSP6 binding region spans residues 1-149; that stretch reads MENLKHIITL…DADEDRRAFQ (149 aa). A coiled-coil region spans residues 55–84; the sequence is SEKLTTAMNRFKAALEEANGEIEKFSNRSN. Serine 125 carries the post-translational modification Phosphoserine. Residues 139–180 adopt a coiled-coil conformation; it reads QDADEDRRAFQMLRRDNEKIEASLRRLEINMKEIKETLRQYL. Residues 194–469 enclose the Protein kinase domain; it reads KEIKKEQLSG…DEILKKLSTF (276 aa). ATP contacts are provided by residues 209-217 and lysine 230; that span reads LRENEVSTL. At threonine 357 the chain carries Phosphothreonine; by RIPK3. Serine 358 and serine 360 each carry phosphoserine; by RIPK3.

This sequence belongs to the protein kinase superfamily. In terms of assembly, homooligomer. Homotrimer; forms homotrimers on necroptosis induction. Upon TNF-induced necrosis, forms in complex with PGAM5, RIPK1 and RIPK3. Within this complex, may play a role in the proper targeting of RIPK1-RIPK3 to its downstream effector PGAM5. Interacts with RIPK3; the interaction is direct and promotes its phosphorylation and subsequent activation. Post-translationally, phosphorylation by RIPK3 induces a conformational switch that is required for necroptosis. It also induces homotrimerization and localization to the plasma membrane.

It is found in the cytoplasm. The protein resides in the cell membrane. Its subcellular location is the nucleus. Activated via binding to highly phosphorylated inositol phosphates such as inositolhexakisphosphate (InsP6) which mediates the release of an N-terminal auto-inhibitory region. Activation requires not only RIPK3-dependent phosphorylation but also binding to highly phosphorylated inositol phosphates. Inhibited by necrosulfonamide, a specific inhibitor of necroptosis that targets Cys-86. Its function is as follows. Pseudokinase that plays a key role in TNF-induced necroptosis, a programmed cell death process. Does not have protein kinase activity. Activated following phosphorylation by RIPK3, leading to homotrimerization, localization to the plasma membrane and execution of programmed necrosis characterized by calcium influx and plasma membrane damage. In addition to TNF-induced necroptosis, necroptosis can also take place in the nucleus in response to orthomyxoviruses infection: following activation by ZBP1, MLKL is phosphorylated by RIPK3 in the nucleus, triggering disruption of the nuclear envelope and leakage of cellular DNA into the cytosol.following ZBP1 activation, which senses double-stranded Z-RNA structures, nuclear RIPK3 catalyzes phosphorylation and activation of MLKL, promoting disruption of the nuclear envelope and leakage of cellular DNA into the cytosol. Binds to highly phosphorylated inositol phosphates such as inositolhexakisphosphate (InsP6) which is essential for its necroptotic function. This is Mixed lineage kinase domain-like protein from Homo sapiens (Human).